The chain runs to 400 residues: Mu-type opioid receptor (400 aa).

The Extracellular portion of the chain corresponds to 1 to 68; it reads MDSSAAPTNA…CPPTGSPSMI (68 aa). 5 N-linked (GlcNAc...) asparagine glycosylation sites follow: asparagine 9, asparagine 12, asparagine 33, asparagine 40, and asparagine 48. The chain crosses the membrane as a helical span at residues 69–93; the sequence is TAITIMALYSIVCVVGLFGNFLVMY. The Cytoplasmic portion of the chain corresponds to 94 to 106; sequence VIVRYTKMKTATN. The helical transmembrane segment at 107–131 threads the bilayer; it reads IYIFNLALADALATSTLPFQSVNYL. The Extracellular portion of the chain corresponds to 132-142; that stretch reads MGTWPFGTILC. The cysteines at positions 142 and 219 are disulfide-linked. The chain crosses the membrane as a helical span at residues 143-165; the sequence is KIVISIDYYNMFTSIFTLCTMSV. Residues 166–185 are Cytoplasmic-facing; it reads DRYIAVCHPVKALDFRTPRN. At tyrosine 168 the chain carries Phosphotyrosine. Residues 186-207 form a helical membrane-spanning segment; that stretch reads AKIINVCNWILSSAIGLPVMFM. The Extracellular portion of the chain corresponds to 208 to 230; the sequence is ATTKYRQGSIDCTLTFSHPTWYW. Residues 231 to 255 form a helical membrane-spanning segment; sequence ENLLKICVFIFAFIMPVLIITVCYG. At 256–279 the chain is on the cytoplasmic side; that stretch reads LMILRLKSVRMLSGSKEKDRNLRR. The helical transmembrane segment at 280–306 threads the bilayer; the sequence is ITRMVLVVVAVFIVCWTPIHIYVIIKA. Over 307–314 the chain is Extracellular; sequence LVTIPETT. The helical transmembrane segment at 315–338 threads the bilayer; sequence FQTVSWHFCIALGYTNSCLNPVLY. An NPxxY; plays a role in stabilizing the activated conformation of the receptor motif is present at residues 334–338; the sequence is NPVLY. Topologically, residues 339-400 are cytoplasmic; sequence AFLDENFKRC…NLEAETAPLP (62 aa). The S-palmitoyl cysteine moiety is linked to residue cysteine 353. At serine 365 the chain carries Phosphoserine. Residue threonine 372 is modified to Phosphothreonine. Residue serine 377 is modified to Phosphoserine. A Phosphothreonine modification is found at threonine 396.

Belongs to the G-protein coupled receptor 1 family. As to quaternary structure, forms homooligomers and heterooligomers with other GPCRs, such as OPRD1, OPRK1, OPRL1, NPFFR2, ADRA2A, SSTR2, CNR1 and CCR5 (probably in dimeric forms). Interacts with heterotrimeric G proteins; interaction with a heterotrimeric complex containing GNAI1, GNB1 and GNG2 stabilizes the active conformation of the receptor and increases its affinity for endomorphin-2, the synthetic opioid peptide DAMGO and for morphinan agonists. Interacts with PPL; the interaction disrupts agonist-mediated G-protein activation. Interacts (via C-terminus) with DNAJB4 (via C-terminus). Interacts with calmodulin; the interaction inhibits the constitutive activity of OPRM1; it abolishes basal and attenuates agonist-stimulated G-protein coupling. Interacts with FLNA, PLD2, RANBP9 and WLS and GPM6A. Interacts with RTP4. Interacts with SYP and GNAS. Interacts with RGS9, RGS17, RGS20, RGS4, PPP1R9B and HINT1. Post-translationally, phosphorylated. Differentially phosphorylated in basal and agonist-induced conditions. Agonist-mediated phosphorylation modulates receptor internalization. Phosphorylated by GRK2 in a agonist-dependent manner. Phosphorylation at Tyr-168 requires receptor activation, is dependent on non-receptor protein tyrosine kinase Src and results in a decrease in agonist efficacy by reducing G-protein coupling efficiency. Phosphorylated on tyrosine residues; the phosphorylation is involved in agonist-induced G-protein-independent receptor down-regulation. Phosphorylation at Ser-377 is involved in G-protein-dependent but not beta-arrestin-dependent activation of the ERK pathway. In terms of processing, ubiquitinated. A basal ubiquitination seems not to be related to degradation. Ubiquitination is increased upon formation of OPRM1:OPRD1 oligomers leading to proteasomal degradation; the ubiquitination is diminished by RTP4. In terms of tissue distribution, expressed in brain. Isoform 16 and isoform 17 are detected in brain.

It localises to the cell membrane. The protein resides in the cell projection. Its subcellular location is the axon. It is found in the perikaryon. The protein localises to the dendrite. It localises to the endosome. The protein resides in the cytoplasm. In terms of biological role, receptor for endogenous opioids such as beta-endorphin and endomorphin. Receptor for natural and synthetic opioids including morphine, heroin, DAMGO, fentanyl, etorphine, buprenorphin and methadone. Also activated by enkephalin peptides, such as Met-enkephalin or Met-enkephalin-Arg-Phe, with higher affinity for Met-enkephalin-Arg-Phe. Agonist binding to the receptor induces coupling to an inactive GDP-bound heterotrimeric G-protein complex and subsequent exchange of GDP for GTP in the G-protein alpha subunit leading to dissociation of the G-protein complex with the free GTP-bound G-protein alpha and the G-protein beta-gamma dimer activating downstream cellular effectors. The agonist- and cell type-specific activity is predominantly coupled to pertussis toxin-sensitive G(i) and G(o) G alpha proteins, GNAI1, GNAI2, GNAI3 and GNAO1 isoforms Alpha-1 and Alpha-2, and to a lesser extent to pertussis toxin-insensitive G alpha proteins GNAZ and GNA15. They mediate an array of downstream cellular responses, including inhibition of adenylate cyclase activity and both N-type and L-type calcium channels, activation of inward rectifying potassium channels, mitogen-activated protein kinase (MAPK), phospholipase C (PLC), phosphoinositide/protein kinase (PKC), phosphoinositide 3-kinase (PI3K) and regulation of NF-kappa-B. Also couples to adenylate cyclase stimulatory G alpha proteins. The selective temporal coupling to G-proteins and subsequent signaling can be regulated by RGSZ proteins, such as RGS9, RGS17 and RGS4. Phosphorylation by members of the GPRK subfamily of Ser/Thr protein kinases and association with beta-arrestins is involved in short-term receptor desensitization. Beta-arrestins associate with the GPRK-phosphorylated receptor and uncouple it from the G-protein thus terminating signal transduction. The phosphorylated receptor is internalized through endocytosis via clathrin-coated pits which involves beta-arrestins. The activation of the ERK pathway occurs either in a G-protein-dependent or a beta-arrestin-dependent manner and is regulated by agonist-specific receptor phosphorylation. Acts as a class A G-protein coupled receptor (GPCR) which dissociates from beta-arrestin at or near the plasma membrane and undergoes rapid recycling. Receptor down-regulation pathways are varying with the agonist and occur dependent or independent of G-protein coupling. Endogenous ligands induce rapid desensitization, endocytosis and recycling. Heterooligomerization with other GPCRs can modulate agonist binding, signaling and trafficking properties. Couples to GNAS and is proposed to be involved in excitatory effects. Its function is as follows. Does not bind agonists but may act through oligomerization with binding-competent OPRM1 isoforms and reduce their ligand binding activity. The sequence is that of Mu-type opioid receptor (OPRM1) from Homo sapiens (Human).